We begin with the raw amino-acid sequence, 98 residues long: Large ribosomal subunit protein uL23 (98 aa).

The protein belongs to the universal ribosomal protein uL23 family. Part of the 50S ribosomal subunit. Contacts protein L29, and trigger factor when it is bound to the ribosome.

In terms of biological role, one of the early assembly proteins it binds 23S rRNA. One of the proteins that surrounds the polypeptide exit tunnel on the outside of the ribosome. Forms the main docking site for trigger factor binding to the ribosome. This chain is Large ribosomal subunit protein uL23, found in Rickettsia akari (strain Hartford).